The following is a 358-amino-acid chain: Putative hydrogenase expression/formation protein MJ0993 (358 aa).

Residues Cys33, Cys61, and Cys64 each coordinate Fe cation.

This sequence belongs to the HypD family.

This Methanocaldococcus jannaschii (strain ATCC 43067 / DSM 2661 / JAL-1 / JCM 10045 / NBRC 100440) (Methanococcus jannaschii) protein is Putative hydrogenase expression/formation protein MJ0993.